A 214-amino-acid chain; its full sequence is Thymidylate kinase (214 aa).

G10 to T17 serves as a coordination point for ATP.

The protein belongs to the thymidylate kinase family.

The catalysed reaction is dTMP + ATP = dTDP + ADP. In terms of biological role, phosphorylation of dTMP to form dTDP in both de novo and salvage pathways of dTTP synthesis. The sequence is that of Thymidylate kinase from Limosilactobacillus fermentum (strain NBRC 3956 / LMG 18251) (Lactobacillus fermentum).